A 200-amino-acid polypeptide reads, in one-letter code: Probable molybdenum cofactor guanylyltransferase (200 aa).

GTP is bound by residues 9–11, K21, D69, and D100; that span reads LAG. D100 provides a ligand contact to Mg(2+).

This sequence belongs to the MobA family. Mg(2+) is required as a cofactor.

The protein localises to the cytoplasm. It catalyses the reaction Mo-molybdopterin + GTP + H(+) = Mo-molybdopterin guanine dinucleotide + diphosphate. Functionally, transfers a GMP moiety from GTP to Mo-molybdopterin (Mo-MPT) cofactor (Moco or molybdenum cofactor) to form Mo-molybdopterin guanine dinucleotide (Mo-MGD) cofactor. The protein is Probable molybdenum cofactor guanylyltransferase of Bacillus cereus (strain ATCC 10987 / NRS 248).